The sequence spans 228 residues: DNA-binding response regulator MtrA (228 aa).

Residues 7–120 (RILVVDDDPS…ELVARVRARL (114 aa)) enclose the Response regulatory domain. A 4-aspartylphosphate modification is found at aspartate 56. Residues 128-227 (AEMLSIGDVE…VRGVGYKAGP (100 aa)) constitute a DNA-binding region (ompR/PhoB-type).

In terms of assembly, probably a monomer when inactive, phosphorylation may permit it to oligomerize. The monomeric form does not seem to be phosphorylated. Phosphorylated by MtrB.

The protein localises to the cytoplasm. Member of the two-component regulatory system MtrA/MtrB, responding to environmental signals. Controls expression of a number of genes including dnaA, ripA, fbpB and probably itself. Probably plays a role in cell division. The chain is DNA-binding response regulator MtrA (mtrA) from Mycolicibacterium smegmatis (strain ATCC 700084 / mc(2)155) (Mycobacterium smegmatis).